The sequence spans 358 residues: tRNA-specific 2-thiouridylase MnmA (358 aa).

Residues 6–13 (ALSGGVDS) and methionine 32 contribute to the ATP site. The active-site Nucleophile is the cysteine 103. The cysteines at positions 103 and 201 are disulfide-linked. Glycine 127 contacts ATP. An interaction with tRNA region spans residues 151–153 (KDQ). Residue cysteine 201 is the Cysteine persulfide intermediate of the active site.

The protein belongs to the MnmA/TRMU family.

Its subcellular location is the cytoplasm. The enzyme catalyses S-sulfanyl-L-cysteinyl-[protein] + uridine(34) in tRNA + AH2 + ATP = 2-thiouridine(34) in tRNA + L-cysteinyl-[protein] + A + AMP + diphosphate + H(+). Functionally, catalyzes the 2-thiolation of uridine at the wobble position (U34) of tRNA, leading to the formation of s(2)U34. In Thermotoga petrophila (strain ATCC BAA-488 / DSM 13995 / JCM 10881 / RKU-1), this protein is tRNA-specific 2-thiouridylase MnmA.